Here is a 291-residue protein sequence, read N- to C-terminus: uncharacterized protein (291 aa).

Residues Met-1–Thr-58 enclose the HTH lysR-type domain. A DNA-binding region (H-T-H motif) is located at residues Phe-18–Arg-37.

It belongs to the LysR transcriptional regulatory family.

This is an uncharacterized protein from Bacillus subtilis (strain 168).